Consider the following 326-residue polypeptide: UPF0324 membrane protein PBPRB0970 (326 aa).

10 helical membrane-spanning segments follow: residues 27-49 (FFII…ILGF), 70-89 (LLAY…QAIA), 94-116 (GFGL…TKAL), 123-145 (GHLI…APAI), 155-177 (ALAT…GHLL), 184-206 (FGTW…GAYG), 216-235 (IKLA…ALLF), 242-261 (IGIP…AHFV), 271-290 (IFVA…GSGI), and 303-325 (LLLG…LLNV).

It belongs to the UPF0324 family.

It is found in the cell membrane. The sequence is that of UPF0324 membrane protein PBPRB0970 from Photobacterium profundum (strain SS9).